We begin with the raw amino-acid sequence, 700 residues long: Mei4-dependent protein 6 (700 aa).

Kelch repeat units follow at residues 276–322, 327–381, 390–439, 452–499, 508–558, and 569–619; these read CIYL…MVID, KLYL…FDHG, IVYV…KIER, KLYI…FCQR, RIFT…SRFG, and IIYL…RFHE.

The polypeptide is Mei4-dependent protein 6 (mde6) (Schizosaccharomyces pombe (strain 972 / ATCC 24843) (Fission yeast)).